An 858-amino-acid chain; its full sequence is Leucine--tRNA ligase (858 aa).

The 'HIGH' region motif lies at 42-52 (PYPSGRLHMGH). Residues 618–622 (KMSKS) carry the 'KMSKS' region motif. Lysine 621 serves as a coordination point for ATP.

Belongs to the class-I aminoacyl-tRNA synthetase family.

Its subcellular location is the cytoplasm. The enzyme catalyses tRNA(Leu) + L-leucine + ATP = L-leucyl-tRNA(Leu) + AMP + diphosphate. This Vibrio cholerae serotype O1 (strain ATCC 39541 / Classical Ogawa 395 / O395) protein is Leucine--tRNA ligase.